Consider the following 85-residue polypeptide: uncharacterized protein (85 aa).

A run of 2 helical transmembrane segments spans residues 13–35 (KWLAVAICLAMVGMAVMPAFQPL) and 59–81 (EGIVITATLAAAAATAELVHLLL).

It is found in the cell membrane. This is an uncharacterized protein from Archaeoglobus fulgidus (strain ATCC 49558 / DSM 4304 / JCM 9628 / NBRC 100126 / VC-16).